Consider the following 578-residue polypeptide: Arginine--tRNA ligase (578 aa).

Residues 127–137 carry the 'HIGH' region motif; it reads PNLAKEMHVGH.

Belongs to the class-I aminoacyl-tRNA synthetase family. As to quaternary structure, monomer.

The protein resides in the cytoplasm. It carries out the reaction tRNA(Arg) + L-arginine + ATP = L-arginyl-tRNA(Arg) + AMP + diphosphate. The protein is Arginine--tRNA ligase of Pseudomonas putida (strain GB-1).